The chain runs to 287 residues: MAVLAPLLAVLYAAPGLLRWVSQPYYLISALLSASFLLVRKVPPACSVLPTQREDGNPCDFDWREVEILMFLSAIVMMKNRRSITVEQHIGNIFMFSKVANTILFFRLDLRMGLLYITLCIVFLMTCKPPLYLGPEHIKYFSDKTLEEEMQSDGRVSWIVEFFANWSSECQSFAPIYAELSLKYNCAGLKFGKVDIGRYPEVSCRYSISPSPLSKQLPTLILFQGGREVFRRPQVDKKGRAVSWSFTQENVIREFNLNELYLKAKKIRKHQEESIHENEWNDGKKDQ.

An N-terminal signal peptide occupies residues Met1 to Ala13. At Ala14–Met112 the chain is on the extracellular side. Residues Gly113–Leu133 traverse the membrane as a helical segment. Topologically, residues Gly134 to Gln287 are cytoplasmic. A Thioredoxin domain is found at His137–Ser209. The Di-lysine motif signature appears at Lys284 to Gln287.

Monomer. Homodimer; disulfide-linked. Occurs in both reduced and oxidized monomeric form. Oxidative conditions increase homodimerization.

The protein localises to the endoplasmic reticulum membrane. Its subcellular location is the mitochondrion membrane. Functionally, endoplasmic reticulum and mitochondria-associated protein that probably functions as a regulator of cellular redox state and thereby regulates protein post-translational modification, protein folding and mitochondrial activity. In Xenopus laevis (African clawed frog), this protein is Thioredoxin-related transmembrane protein 2 (tmx2).